The chain runs to 577 residues: Moesin (577 aa).

In terms of domain architecture, FERM spans 2–295; sequence PKTISVRVTT…GNHELYMRRR (294 aa). Position 74 is a phosphoserine (Ser74). Lys79 is subject to N6-acetyllysine. Lys83 bears the N6-succinyllysine mark. A [IL]-x-C-x-x-[DE] motif motif is present at residues 115-120; it reads IYCPPE. Phosphotyrosine is present on Tyr116. Cys117 is subject to S-nitrosocysteine. Residues Lys139 and Lys165 each carry the N6-acetyllysine modification. Disordered regions lie at residues 323-342, 375-409, and 466-518; these read LENE…KIER, LEQE…ASRD, and AMST…NERV. Over residues 375 to 401 the composition is skewed to basic and acidic residues; it reads LEQERKRAQSEAEKLAKERQEAEEAKE. At Ser407 the chain carries Phosphoserine. The segment covering 476 to 487 has biased composition (acidic residues); the sequence is AENEQDEQDENG. The segment covering 492–518 has biased composition (basic and acidic residues); it reads ADLRADAMAKDRSEEERTTEAEKNERV. The residue at position 527 (Ser527) is a Phosphoserine. At Thr558 the chain carries Phosphothreonine; by ROCK2 and STK10.

In resting T-cells, part of a PAG1-NHERF1-MSN complex which is disrupted upon TCR activation. Interacts with NHERF1. Interacts with PPP1R16B. Interacts with SELPLG and SYK; these interactions mediate the activation of SYK by SELPLG. Interacts with PDPN (via cytoplasmic domain); this interaction activates RHOA and promotes epithelial-mesenchymal transition. Interacts with SPN/CD43 cytoplasmic tail. Interacts with CD44. Interacts with ICAM2. Interacts with ICAM3 (via C-terminus). Interacts with PDZD8. Interacts with F-actin. Interacts with CD46. Interacts with PTPN6. In terms of assembly, (Microbial infection) Interacts with HIV-1 envelope protein gp120. In terms of processing, phosphorylation on Thr-558 is crucial for the formation of microvilli-like structures. Phosphorylation by ROCK2 suppresses the head-to-tail association of the N-terminal and C-terminal halves resulting in an opened conformation which is capable of actin and membrane-binding. Phosphorylation on Thr-558 by STK10 negatively regulates lymphocyte migration and polarization. Post-translationally, S-nitrosylation of Cys-117 is induced by interferon-gamma and oxidatively-modified low-densitity lipoprotein (LDL(ox)) implicating the iNOS-S100A8/9 transnitrosylase complex. As to expression, in all tissues and cultured cells studied.

The protein localises to the cell membrane. Its subcellular location is the cytoplasm. It localises to the cytoskeleton. The protein resides in the apical cell membrane. It is found in the cell projection. The protein localises to the microvillus membrane. Its subcellular location is the microvillus. With respect to regulation, a head-to-tail association, of the N-terminal and C-terminal halves results in a closed conformation (inactive form) which is incapable of actin or membrane-binding. Its function is as follows. Ezrin-radixin-moesin (ERM) family protein that connects the actin cytoskeleton to the plasma membrane and thereby regulates the structure and function of specific domains of the cell cortex. Tethers actin filaments by oscillating between a resting and an activated state providing transient interactions between moesin and the actin cytoskeleton. Once phosphorylated on its C-terminal threonine, moesin is activated leading to interaction with F-actin and cytoskeletal rearrangement. These rearrangements regulate many cellular processes, including cell shape determination, membrane transport, and signal transduction. The role of moesin is particularly important in immunity acting on both T and B-cells homeostasis and self-tolerance, regulating lymphocyte egress from lymphoid organs. Modulates phagolysosomal biogenesis in macrophages. Also participates in immunologic synapse formation. The polypeptide is Moesin (Homo sapiens (Human)).